Here is a 104-residue protein sequence, read N- to C-terminus: Large ribosomal subunit protein bL21 (104 aa).

Belongs to the bacterial ribosomal protein bL21 family. As to quaternary structure, part of the 50S ribosomal subunit. Contacts protein L20.

Functionally, this protein binds to 23S rRNA in the presence of protein L20. The sequence is that of Large ribosomal subunit protein bL21 from Francisella tularensis subsp. tularensis (strain FSC 198).